A 557-amino-acid polypeptide reads, in one-letter code: 2,3-bisphosphoglycerate-independent phosphoglycerate mutase 1 (557 aa).

Residues aspartate 27 and serine 80 each contribute to the Mn(2+) site. The active-site Phosphoserine intermediate is the serine 80. Substrate is bound by residues histidine 139, arginine 169–aspartate 170, arginine 205, arginine 212, arginine 285–arginine 288, and lysine 360. 5 residues coordinate Mn(2+): aspartate 429, histidine 433, aspartate 470, histidine 471, and histidine 500.

This sequence belongs to the BPG-independent phosphoglycerate mutase family. As to quaternary structure, monomer. It depends on Mn(2+) as a cofactor.

The protein localises to the cytoplasm. It carries out the reaction (2R)-2-phosphoglycerate = (2R)-3-phosphoglycerate. Its pathway is carbohydrate degradation; glycolysis; pyruvate from D-glyceraldehyde 3-phosphate: step 3/5. In terms of biological role, catalyzes the interconversion of 2-phosphoglycerate (2-PGA) and 3-phosphoglycerate (3-PGA). Required for guard cell function (e.g. blue light-, abscisic acid- (ABA), and low CO(2)-regulated stomatal movements) and fertility (e.g. pollen grains production). The sequence is that of 2,3-bisphosphoglycerate-independent phosphoglycerate mutase 1 (PGM1) from Arabidopsis thaliana (Mouse-ear cress).